Here is a 156-residue protein sequence, read N- to C-terminus: UPF0225 protein PFLU_1319 (156 aa).

It belongs to the UPF0225 family.

In Pseudomonas fluorescens (strain SBW25), this protein is UPF0225 protein PFLU_1319.